The sequence spans 747 residues: Endopolyphosphatase (747 aa).

Met-1 is a topological domain (cytoplasmic). The helical; Signal-anchor for type II membrane protein transmembrane segment at 2 to 22 threads the bilayer; it reads LPKTLTIWASLASLAVAQSGQ. At 23-747 the chain is on the vacuolar side; it reads VVFAKNADGK…AEYLEEPDDD (725 aa). N-linked (GlcNAc...) asparagine glycosylation is found at Asn-134, Asn-191, and Asn-463. The disordered stretch occupies residues 570-640; sequence AVATSSEPES…PKFPKDLQPG (71 aa). Positions 577 to 586 are enriched in acidic residues; it reads PESDDYDSDL. Residues 591 to 625 are compositionally biased toward basic residues; sequence KKGKKKGKKGKKGKKGKKGKKKKGKKGKKGKKGKR. Over residues 626–635 the composition is skewed to basic and acidic residues; it reads DKSMPPKFPK. Asn-659 carries N-linked (GlcNAc...) asparagine glycosylation.

It belongs to the endopolyphosphatase PPN1 family. A divalent metal cation serves as cofactor. In terms of processing, processing by proteases in the vacuole may be required for activation.

It is found in the vacuole membrane. It catalyses the reaction [phosphate](n+1) + n H2O = (n+1) phosphate + n H(+). Its function is as follows. Catalyzes the hydrolysis of inorganic polyphosphate (polyP) chains of many hundreds of phosphate residues into shorter lengths. The polypeptide is Endopolyphosphatase (PPN1) (Yarrowia lipolytica (strain CLIB 122 / E 150) (Yeast)).